The chain runs to 317 residues: Beta-ketoacyl-[acyl-carrier-protein] synthase III (317 aa).

Catalysis depends on residues Cys-112 and His-244. The tract at residues 245 to 249 (QANLR) is ACP-binding. Asn-274 is an active-site residue.

Belongs to the thiolase-like superfamily. FabH family. Homodimer.

It is found in the cytoplasm. The catalysed reaction is malonyl-[ACP] + acetyl-CoA + H(+) = 3-oxobutanoyl-[ACP] + CO2 + CoA. The protein operates within lipid metabolism; fatty acid biosynthesis. Catalyzes the condensation reaction of fatty acid synthesis by the addition to an acyl acceptor of two carbons from malonyl-ACP. Catalyzes the first condensation reaction which initiates fatty acid synthesis and may therefore play a role in governing the total rate of fatty acid production. Possesses both acetoacetyl-ACP synthase and acetyl transacylase activities. Its substrate specificity determines the biosynthesis of branched-chain and/or straight-chain of fatty acids. The sequence is that of Beta-ketoacyl-[acyl-carrier-protein] synthase III from Salmonella paratyphi A (strain ATCC 9150 / SARB42).